Consider the following 380-residue polypeptide: Probable RAD2-like endonuclease 076L (380 aa).

Positions 1–101 (MGIKNLTQFL…QKIVSKTDAI (101 aa)) are N-domain. The Mg(2+) site is built by aspartate 32, glutamate 73, glutamate 191, glutamate 193, aspartate 212, aspartate 214, and aspartate 281. The interval 156-301 (IDRRRKYEFS…EKAYKYISDY (146 aa)) is I-domain.

Belongs to the XPG/RAD2 endonuclease family. Mg(2+) is required as a cofactor.

Its subcellular location is the host nucleus. Its function is as follows. Probable endonuclease. The protein is Probable RAD2-like endonuclease 076L of Invertebrate iridescent virus 3 (IIV-3).